Consider the following 427-residue polypeptide: UDP-N-acetyl-D-mannosamine dehydrogenase (427 aa).

Positions 19, 20, 39, 44, 91, and 130 each coordinate NAD(+). UDP-N-acetyl-alpha-D-mannosaminouronate contacts are provided by Arg155, Val156, Lys207, Asn211, Arg214, His245, Arg247, and Gly258. Lys207 (proton donor/acceptor) is an active-site residue. Cys261 serves as the catalytic Nucleophile. UDP-N-acetyl-alpha-D-mannosaminouronate is bound by residues Tyr318 and Lys319. Residue Arg326 coordinates NAD(+). Residue Lys404 coordinates UDP-N-acetyl-alpha-D-mannosaminouronate.

This sequence belongs to the UDP-glucose/GDP-mannose dehydrogenase family. In terms of assembly, homotetramer; probably dimer of dimers.

It catalyses the reaction UDP-N-acetyl-alpha-D-mannosamine + 2 NAD(+) + H2O = UDP-N-acetyl-alpha-D-mannosaminouronate + 2 NADH + 3 H(+). Its function is as follows. Catalyzes the four-electron oxidation of UDP-N-acetyl-D-mannosamine (UDP-ManNAc), reducing NAD(+) and releasing UDP-N-acetylmannosaminuronic acid (UDP-ManNAcA). The chain is UDP-N-acetyl-D-mannosamine dehydrogenase (wecC) from Methanococcus maripaludis (strain C7 / ATCC BAA-1331).